The primary structure comprises 485 residues: Glycogen synthase (485 aa).

Lys21 lines the ADP-alpha-D-glucose pocket.

It belongs to the glycosyltransferase 1 family. Bacterial/plant glycogen synthase subfamily.

It carries out the reaction [(1-&gt;4)-alpha-D-glucosyl](n) + ADP-alpha-D-glucose = [(1-&gt;4)-alpha-D-glucosyl](n+1) + ADP + H(+). It functions in the pathway glycan biosynthesis; glycogen biosynthesis. Functionally, synthesizes alpha-1,4-glucan chains using ADP-glucose. This chain is Glycogen synthase, found in Pseudomonas savastanoi pv. phaseolicola (strain 1448A / Race 6) (Pseudomonas syringae pv. phaseolicola (strain 1448A / Race 6)).